Reading from the N-terminus, the 241-residue chain is Putative hydrolase 080R (241 aa).

A Nudix hydrolase domain is found at 50–241 (FPDLSFNLMV…VIKVQKIMIL (192 aa)). A Nudix box motif is present at residues 136–157 (GHCNGNEPVLSTLLREFREETT). Residues E151, E155, and D204 each contribute to the Mg(2+) site.

This sequence belongs to the Nudix hydrolase family.

This Aedes vexans (Inland floodwater mosquito) protein is Putative hydrolase 080R.